Consider the following 1226-residue polypeptide: 3-hydroxy-3-methylglutaryl-coenzyme A reductase (1226 aa).

Transmembrane regions (helical) follow at residues 17–37, 224–244, 252–272, 337–357, and 373–393; these read IETI…ILSG, ILVV…LFLA, FWLS…TLPM, VGNM…VGVN, and LLAM…TIMV. Positions 223–391 constitute an SSD domain; sequence DILVVLTGYI…FTLYTAVLTI (169 aa). The tract at residues 428–449 is disordered; sequence LSRKSSKQSVTEPETTKNLRQR. Over residues 434–445 the composition is skewed to polar residues; it reads KQSVTEPETTKN. A helical membrane pass occupies residues 481-501; it reads LLLIASFLTLHILNFCTTLTS. Disordered stretches follow at residues 683–702 and 722–742; these read APAP…PPPL and LPIR…EVEP. The span at 685–702 shows a compositional bias: pro residues; the sequence is APAPAPEPEPPVNRPPPL. Catalysis depends on Glu-869, which acts as the Charge relay system. 875–881 lines the CoA pocket; sequence STSRGCK. Residues 936 to 938 and 963 to 971 each bind NADP(+); these read SRF and DAMGMNMIS. The active-site Charge relay system is Lys-1001. 1030 to 1032 lines the CoA pocket; it reads VLK. Asp-1077 acts as the Charge relay system in catalysis. Residues 1150 to 1170 traverse the membrane as a helical segment; it reads IIASAVMAGELSLISALAAGH. A CoA-binding site is contributed by 1174–1175; it reads AH. The active-site Proton donor is His-1175. 1179–1180 is an NADP(+) binding site; the sequence is NR. Residues 1182-1226 are disordered; the sequence is QLNTPMPSRPHTPGPEDVSHVQQLPTPSASDDKGVTAQGYVVEAK. Residues 1201 to 1210 are compositionally biased toward polar residues; that stretch reads HVQQLPTPSA.

It belongs to the HMG-CoA reductase family.

It is found in the endoplasmic reticulum membrane. The catalysed reaction is (R)-mevalonate + 2 NADP(+) + CoA = (3S)-3-hydroxy-3-methylglutaryl-CoA + 2 NADPH + 2 H(+). It functions in the pathway metabolic intermediate biosynthesis; (R)-mevalonate biosynthesis; (R)-mevalonate from acetyl-CoA: step 3/3. Functionally, HMG-CoA reductase; part of the first module of ergosterol biosynthesis pathway that includes the early steps of the pathway, conserved across all eukaryotes, and which results in the formation of mevalonate from acetyl-coenzyme A (acetyl-CoA). This module also plays a key role in the biosynthesis of triterpenes such as ganoderic acids (GA), a group of highly oxygenated lanostane-type triterpenoids which are well recognized as a main group of unique bioactive compounds in the medicinal mushroom Ganoderma lucidum. In this module, the acetyl-CoA acetyltransferase catalyzes the formation of acetoacetyl-CoA. The hydroxymethylglutaryl-CoA synthase HMGS then condenses acetyl-CoA with acetoacetyl-CoA to form HMG-CoA. The rate-limiting step of the early module is the reduction to mevalonate by the 3-hydroxy-3-methylglutaryl-coenzyme A (HMG-CoA) reductase. The protein is 3-hydroxy-3-methylglutaryl-coenzyme A reductase of Ganoderma lucidum (Ling zhi medicinal fungus).